The primary structure comprises 159 residues: Ribosomal RNA large subunit methyltransferase H (159 aa).

Residues Leu76, Gly107, and 126 to 131 (LSSLTL) each bind S-adenosyl-L-methionine.

The protein belongs to the RNA methyltransferase RlmH family. Homodimer.

The protein localises to the cytoplasm. The enzyme catalyses pseudouridine(1915) in 23S rRNA + S-adenosyl-L-methionine = N(3)-methylpseudouridine(1915) in 23S rRNA + S-adenosyl-L-homocysteine + H(+). Functionally, specifically methylates the pseudouridine at position 1915 (m3Psi1915) in 23S rRNA. This chain is Ribosomal RNA large subunit methyltransferase H, found in Cupriavidus pinatubonensis (strain JMP 134 / LMG 1197) (Cupriavidus necator (strain JMP 134)).